Here is a 548-residue protein sequence, read N- to C-terminus: Membrane protein insertase YidC (548 aa).

Residues asparagine 6–aspartate 26 form a helical membrane-spanning segment. Residues asparagine 28 to serine 55 form a disordered region. Residues glutamine 30–glutamine 50 are compositionally biased toward low complexity. A run of 4 helical transmembrane segments spans residues phenylalanine 350–tyrosine 370, leucine 420–leucine 440, leucine 458–isoleucine 478, and proline 499–valine 519.

The protein belongs to the OXA1/ALB3/YidC family. Type 1 subfamily. Interacts with the Sec translocase complex via SecD. Specifically interacts with transmembrane segments of nascent integral membrane proteins during membrane integration.

It localises to the cell inner membrane. Functionally, required for the insertion and/or proper folding and/or complex formation of integral membrane proteins into the membrane. Involved in integration of membrane proteins that insert both dependently and independently of the Sec translocase complex, as well as at least some lipoproteins. Aids folding of multispanning membrane proteins. The polypeptide is Membrane protein insertase YidC (Shigella dysenteriae serotype 1 (strain Sd197)).